An 827-amino-acid chain; its full sequence is SH3-containing GRB2-like protein 3-interacting protein 1 (827 aa).

Disordered regions lie at residues 1–115 (MMEG…ESHK), 142–205 (SIGN…GPPL), and 223–278 (IWGS…QAAT). Composition is skewed to basic and acidic residues over residues 16-32 (RKKEKDTDSTGSPDRDG) and 40-54 (PPYHSKAECAREGGK). Ser78, Ser104, Ser105, Ser107, Ser149, Ser151, Ser156, and Ser169 each carry phosphoserine. Thr180 and Thr182 each carry phosphothreonine. Ser236 carries the post-translational modification Phosphoserine. A compositionally biased stretch (pro residues) spans 245-260 (TGTPPPLPPKAVPATP). A phosphothreonine mark is found at Thr247 and Thr259. Phosphoserine occurs at positions 265, 287, 289, 300, 316, and 319. Residues 265–276 (SPLTVATGNDQA) show a composition bias toward polar residues. Residues 314–333 (HFSDASPEHVTPELTPREKV) are compositionally biased toward basic and acidic residues. Residues 314–523 (HFSDASPEHV…LSAATTPTVE (210 aa)) form a disordered region. 3 positions are modified to phosphothreonine: Thr324, Thr328, and Thr335. Over residues 336–345 (PPAASDIPAD) the composition is skewed to low complexity. Pro residues predominate over residues 346-369 (SPAPGPPGPPGSAGPPGPPGPRHV). Ser371 is subject to Phosphoserine. Residues 377 to 392 (EVQKKVAEQTFIKDDY) are compositionally biased toward basic and acidic residues. Ser398 carries the post-translational modification Phosphoserine. Thr409 carries the phosphothreonine modification. Residues 436–455 (ASGASSPARPATPLVPCSST) show a composition bias toward low complexity. Pro residues predominate over residues 456-474 (TPPPPPPRPPSRPKLPPGK). Composition is skewed to low complexity over residues 481-491 (SRPFSPPIHSS) and 498-521 (PLARAESTSSISSTNSLSAATTPT). Phosphoserine is present on Ser485. Residues 558–826 (TLPVAAAFTE…RFAAGKYLAD (269 aa)) form the MHD domain. Interaction with DPF motifs-containing proteins regions lie at residues 560 to 566 (PVAAAFT), 592 to 594 (SFP), 666 to 669 (TYYN), and 812 to 817 (SLIKKR). A necessary and sufficient to mediate interaction with CANX region spans residues 648–827 (MPNLMTHLKK…FAAGKYLADN (180 aa)).

Interacts with proteins essential or regulating the formation of functional clathrin-coated pits. Interacts with CANX. Interacts with AP2A1. Interacts with EPS15. Interacts with SH3GL3. Interacts with AMPH. Interacts with ITSN1 (via SH3 domains). Interacts with and REPS1. As to expression, specifically expressed in brain (at protein level).

It localises to the membrane. It is found in the clathrin-coated pit. Functionally, may function in clathrin-mediated endocytosis. Has both a membrane binding/tubulating activity and the ability to recruit proteins essential to the formation of functional clathrin-coated pits. Has a preference for membranes enriched in phosphatidylserine and phosphoinositides and is required for the endocytosis of the transferrin receptor. May also bind tubulin. May play a role in the regulation of energy homeostasis. This is SH3-containing GRB2-like protein 3-interacting protein 1 (Sgip1) from Rattus norvegicus (Rat).